A 467-amino-acid polypeptide reads, in one-letter code: UDP-glycosyltransferase 71D2 (467 aa).

Residues Ser283, 339-341, 356-364, and 378-381 contribute to the UDP-alpha-D-glucose site; these read SPQ, HCGWNSIVE, and YAEQ.

The protein belongs to the UDP-glycosyltransferase family.

The polypeptide is UDP-glycosyltransferase 71D2 (UGT71D2) (Arabidopsis thaliana (Mouse-ear cress)).